A 339-amino-acid chain; its full sequence is Anthranilate phosphoribosyltransferase (339 aa).

Residues glycine 80, 83-84 (GD), threonine 88, 90-93 (NIST), 108-116 (KHGNRAVSS), and serine 120 each bind 5-phospho-alpha-D-ribose 1-diphosphate. Glycine 80 is an anthranilate binding site. Position 92 (serine 92) interacts with Mg(2+). Asparagine 111 contacts anthranilate. Residue arginine 166 coordinates anthranilate. 2 residues coordinate Mg(2+): aspartate 225 and glutamate 226.

The protein belongs to the anthranilate phosphoribosyltransferase family. As to quaternary structure, homodimer. It depends on Mg(2+) as a cofactor.

It catalyses the reaction N-(5-phospho-beta-D-ribosyl)anthranilate + diphosphate = 5-phospho-alpha-D-ribose 1-diphosphate + anthranilate. The protein operates within amino-acid biosynthesis; L-tryptophan biosynthesis; L-tryptophan from chorismate: step 2/5. Catalyzes the transfer of the phosphoribosyl group of 5-phosphorylribose-1-pyrophosphate (PRPP) to anthranilate to yield N-(5'-phosphoribosyl)-anthranilate (PRA). The chain is Anthranilate phosphoribosyltransferase from Caldanaerobacter subterraneus subsp. tengcongensis (strain DSM 15242 / JCM 11007 / NBRC 100824 / MB4) (Thermoanaerobacter tengcongensis).